The following is a 227-amino-acid chain: Ribonuclease 3 (227 aa).

In terms of domain architecture, RNase III spans 6 to 128; it reads ASDYQQRIGY…VIAAIYLDAD (123 aa). Glu-41 contacts Mg(2+). Asp-45 is an active-site residue. Mg(2+)-binding residues include Asp-114 and Glu-117. Glu-117 is an active-site residue. One can recognise a DRBM domain in the interval 155-225; that stretch reads DPKTRLQEWL…ASHAIDQLDS (71 aa). A compositionally biased stretch (basic and acidic residues) spans 203 to 212; it reads GEGSSRRLAE. The segment at 203 to 227 is disordered; the sequence is GEGSSRRLAEQDAASHAIDQLDSNK.

It belongs to the ribonuclease III family. As to quaternary structure, homodimer. Mg(2+) serves as cofactor.

Its subcellular location is the cytoplasm. The catalysed reaction is Endonucleolytic cleavage to 5'-phosphomonoester.. Functionally, digests double-stranded RNA. Involved in the processing of primary rRNA transcript to yield the immediate precursors to the large and small rRNAs (23S and 16S). Processes some mRNAs, and tRNAs when they are encoded in the rRNA operon. Processes pre-crRNA and tracrRNA of type II CRISPR loci if present in the organism. This is Ribonuclease 3 from Xylella fastidiosa (strain 9a5c).